A 356-amino-acid chain; its full sequence is Alpha-N-acetylneuraminide alpha-2,8-sialyltransferase (356 aa).

The Cytoplasmic segment spans residues 1 to 29 (MSPCGRARRQTSRGAMAVLAWKFPRTRLP). The chain crosses the membrane as a helical; Signal-anchor for type II membrane protein span at residues 30-48 (MGASALCVVVLCWLYIFPV). The Lumenal portion of the chain corresponds to 49 to 356 (YRLPNEKEIV…CEDTSLQPTS (308 aa)). 2 N-linked (GlcNAc...) asparagine glycosylation sites follow: Asn71 and Asn119. 2 disulfide bridges follow: Cys138-Cys287 and Cys152-Cys347. Residues Asn143 and Asn166 each coordinate CMP-N-acetyl-beta-neuraminate. Residues Asn214 and Asn245 are each glycosylated (N-linked (GlcNAc...) asparagine). Residues Ser274, Thr275, Gly276, Trp296, and His310 each coordinate CMP-N-acetyl-beta-neuraminate. The active-site Proton donor/acceptor is His322.

It belongs to the glycosyltransferase 29 family.

It is found in the golgi apparatus membrane. It carries out the reaction an N-acetyl-alpha-neuraminyl-(2-&gt;3)-beta-D-galactosyl derivative + CMP-N-acetyl-beta-neuraminate = an N-acetyl-alpha-neuraminyl-(2-&gt;8)-N-acetyl-alpha-neuraminyl-(2-&gt;3)-beta-D-galactosyl derivative + CMP + H(+). The catalysed reaction is a ganglioside GM3 (d18:1(4E)) + CMP-N-acetyl-beta-neuraminate = a ganglioside GD3 (d18:1(4E)) + CMP + H(+). The enzyme catalyses a ganglioside GD3 (d18:1(4E)) + CMP-N-acetyl-beta-neuraminate = a ganglioside GT3 (d18:1(4E)) + CMP + H(+). It catalyses the reaction a ganglioside GD1a (d18:1(4E)) + CMP-N-acetyl-beta-neuraminate = a ganglioside GT1a (d18:1(4E)) + CMP + H(+). It carries out the reaction a ganglioside GT1b (d18:1(4E)) + CMP-N-acetyl-beta-neuraminate = a ganglioside GQ1b (d18:1(4E)) + CMP + H(+). The catalysed reaction is a ganglioside GM1b (d18:1(4E)) + CMP-N-acetyl-beta-neuraminate = a ganglioside GD1c (d18:1(4E)) + CMP + H(+). The enzyme catalyses a ganglioside GD3 + CMP-N-acetyl-beta-neuraminate = a ganglioside GT3 + CMP + H(+). It catalyses the reaction [alpha-N-acetylneuraminyl-(2-&gt;8)](n)-alpha-N-acetylneuraminyl-(2-&gt;8)-alpha-N-acetylneuraminyl-(2-&gt;3)-beta-D-galactosyl-(1-&gt;4)-beta-D-glucosyl-(1&lt;-&gt;1)-ceramide + CMP-N-acetyl-beta-neuraminate = [alpha-N-acetylneuraminyl-(2-&gt;8)](n+1)-alpha-N-acetylneuraminyl-(2-&gt;8)-alpha-N-acetylneuraminyl-(2-&gt;3)-beta-D-galactosyl-(1-&gt;4)-beta-D-glucosyl-(1&lt;-&gt;1)-ceramide + CMP + H(+). Its pathway is protein modification; protein glycosylation. It participates in lipid metabolism; sphingolipid metabolism. Catalyzes the addition of sialic acid in alpha 2,8-linkage to the sialic acid moiety of the ganglioside GM3 to form ganglioside GD3; gangliosides are a subfamily of complex glycosphingolipds that contain one or more residues of sialic acid. Can catalyze the addition of a second alpha-2,8- sialic acid to GD3 to form GT3. Can use GM1b, GD1a and GT1b as acceptor substrates to synthesize GD1c, GT1a and GQ1b respectively. The sequence is that of Alpha-N-acetylneuraminide alpha-2,8-sialyltransferase from Pan troglodytes (Chimpanzee).